The chain runs to 312 residues: Glyoxylate/hydroxypyruvate reductase A (312 aa).

Arginine 227 is a catalytic residue. Histidine 275 acts as the Proton donor in catalysis.

Belongs to the D-isomer specific 2-hydroxyacid dehydrogenase family. GhrA subfamily.

The protein resides in the cytoplasm. The catalysed reaction is glycolate + NADP(+) = glyoxylate + NADPH + H(+). It catalyses the reaction (R)-glycerate + NAD(+) = 3-hydroxypyruvate + NADH + H(+). It carries out the reaction (R)-glycerate + NADP(+) = 3-hydroxypyruvate + NADPH + H(+). Catalyzes the NADPH-dependent reduction of glyoxylate and hydroxypyruvate into glycolate and glycerate, respectively. The sequence is that of Glyoxylate/hydroxypyruvate reductase A from Citrobacter koseri (strain ATCC BAA-895 / CDC 4225-83 / SGSC4696).